The following is a 169-amino-acid chain: Disulfide bond formation protein B 1 (169 aa).

The Cytoplasmic portion of the chain corresponds to 1–14 (MSDNTLYLRREKRF). A helical membrane pass occupies residues 15 to 31 (LVLLGIICLALIGGALY). Over 32–49 (MQIVLGEAPCPLCILQRY) the chain is Periplasmic. Cys41 and Cys44 form a disulfide bridge. The chain crosses the membrane as a helical span at residues 50-64 (ALLFIAIFAFIGAAM). The Cytoplasmic portion of the chain corresponds to 65-71 (SGRRGVT). A helical transmembrane segment spans residues 72-89 (VCETLVTLSALGGIAAAG). The Periplasmic portion of the chain corresponds to 90–144 (RHVWILAHPSDSCGIDVLQPIVDGLPLATLFPTGFQVSGFCTTPYPPVLGLSLAQ). A disulfide bridge links Cys102 with Cys130. A helical membrane pass occupies residues 145-163 (WALAAFVLTAVLVPACIIR). Topologically, residues 164–169 (NRRKPY) are cytoplasmic.

Belongs to the DsbB family.

It is found in the cell inner membrane. Required for disulfide bond formation in some periplasmic proteins. Acts by oxidizing the DsbA protein. The sequence is that of Disulfide bond formation protein B 1 from Pseudomonas savastanoi pv. phaseolicola (strain 1448A / Race 6) (Pseudomonas syringae pv. phaseolicola (strain 1448A / Race 6)).